The sequence spans 573 residues: LysM domain-containing protein ARB_01155/01156 (573 aa).

The first 18 residues, 1–18 (MIPRNLISGLFLLPFVVA), serve as a signal peptide directing secretion. 3 N-linked (GlcNAc...) asparagine glycosylation sites follow: Asn-46, Asn-71, and Asn-283. Residues 373–419 (RYYEVVAGDQCNTIALHFGITVDAFLSLNTQIDERCSNLWIAYAYCV) enclose the LysM domain. The tract at residues 375-405 (YEVVAGDQCNTIALHFGITVDAFLSLNTQID) is lysM domain.

The protein resides in the secreted. Functionally, might have a role in sequestration of chitin oligosaccharides (breakdown products of fungal cell walls that are released during invasion and act as triggers of host immunity) to dampen host defense. This Arthroderma benhamiae (strain ATCC MYA-4681 / CBS 112371) (Trichophyton mentagrophytes) protein is LysM domain-containing protein ARB_01155/01156.